Reading from the N-terminus, the 115-residue chain is DNA-directed RNA polymerase II subunit RPB11-b1 (115 aa).

This sequence belongs to the archaeal Rpo11/eukaryotic RPB11/RPC19 RNA polymerase subunit family. Component of the RNA polymerase II (Pol II) complex consisting of 12 subunits. Ubiquitously expressed.

It is found in the nucleus. In terms of biological role, DNA-dependent RNA polymerase catalyzes the transcription of DNA into RNA using the four ribonucleoside triphosphates as substrates. Component of RNA polymerase II which synthesizes mRNA precursors and many functional non-coding RNAs. Pol II is the central component of the basal RNA polymerase II transcription machinery. It is composed of mobile elements that move relative to each other. RPB11 is part of the core element with the central large cleft. The polypeptide is DNA-directed RNA polymerase II subunit RPB11-b1 (POLR2J2) (Homo sapiens (Human)).